Here is a 305-residue protein sequence, read N- to C-terminus: uncharacterized protein (305 aa).

A compositionally biased stretch (basic residues) spans 1–10 (MLWAQRKKRK). A disordered region spans residues 1 to 30 (MLWAQRKKRKATTETTEDKPAESHRPNDSW). Residues 16-27 (TEDKPAESHRPN) show a composition bias toward basic and acidic residues. Residue Ser39 is modified to Phosphoserine. The segment covering 92 to 101 (QKISGTSVSK) has biased composition (polar residues). The segment at 92–114 (QKISGTSVSKEMQRESGKSPSME) is disordered. Ser158 carries the phosphoserine modification. The segment covering 197 to 208 (SHHGNQSHQNHN) has biased composition (low complexity). The segment at 197-305 (SHHGNQSHQN…VNRRNQIYDS (109 aa)) is disordered. Polar residues-rich tracts occupy residues 209-221 (TYPCHQNNQSRSV) and 231-244 (LSHQGYPSYSSHQN). A compositionally biased stretch (low complexity) spans 247–293 (GHPSQQGHSSHSNQQGHLGLSSQQGHPSQSSHQSHQGQPGHPNHQSH). Polar residues predominate over residues 294 to 305 (SLVNRRNQIYDS).

This is an uncharacterized protein from Rattus norvegicus (Rat).